Here is a 997-residue protein sequence, read N- to C-terminus: Autophagy-related protein 9 (997 aa).

Topologically, residues 1–318 (MERDEYQLPN…DVYNYYLGNG (318 aa)) are cytoplasmic. At Ser-19 the chain carries Phosphoserine. Residues 29–39 (VNPSLNSQEMS) are compositionally biased toward polar residues. A disordered region spans residues 29 to 88 (VNPSLNSQEMSNFPLPDIERGSSLLHSTNDSREDVDENDLRVPESDQGTSTEEEDEVDEE). Residues 79–88 (TEEEDEVDEE) show a composition bias toward acidic residues. Glycyl lysine isopeptide (Lys-Gly) (interchain with G-Cter in ubiquitin) cross-links involve residues Lys-113 and Lys-121. At Ser-122 the chain carries Phosphoserine. Disordered regions lie at residues 127–159 (LVEGSTDDSVPKVGQLSSEEEEDNEFINNDGFD) and 214–234 (HHDKDKSANNGPRNINGNQKH). Residue Lys-138 forms a Glycyl lysine isopeptide (Lys-Gly) (interchain with G-Cter in ubiquitin) linkage. Phosphoserine occurs at positions 143 and 144. Over residues 144–159 (SEEEEDNEFINNDGFD) the composition is skewed to acidic residues. The segment covering 221-233 (ANNGPRNINGNQK) has biased composition (polar residues). The helical transmembrane segment at 319 to 339 (FYCIILEKILNICTLLFVVFV) threads the bilayer. Over 340 to 376 (STYMGHCVDYSKLPTSHRVSDIIIDKCYSNSITGFTK) the chain is Lumenal. Residues 377–397 (FFLWMFYFFVILKIVQLYFDV) traverse the membrane as a helical segment. At 398 to 538 (QKLSELQNFY…EELQKRFMLA (141 aa)) the chain is on the cytoplasmic side. An intramembrane segment occupies 539–559 (GFLNIILAPFLVTYFVLLYFF). Topologically, residues 560 to 620 (RYFNEYKTSP…DQFPKEKTNL (61 aa)) are cytoplasmic. The chain crosses the membrane as a helical span at residues 621-641 (FLKFVSFICGSFVAILAFLTV). Over 642-656 (FDPENFLNFEITSDR) the chain is Lumenal. The residue at position 657 (Ser-657) is a Phosphoserine. Residues 657 to 677 (SVIFYITILGAIWSVSRNTIT) traverse the membrane as a helical segment. At 678–723 (QEYHVFDPEETLKELYEYTHYLPKEWEGRYHKEEIKLEFCKLYNLR) the chain is on the cytoplasmic side. Lys-701 participates in a covalent cross-link: Glycyl lysine isopeptide (Lys-Gly) (interchain with G-Cter in ubiquitin). The stretch at 724–744 (IVILLRELTSLMITPFVLWFS) is an intramembrane region. The Cytoplasmic portion of the chain corresponds to 745–997 (LPSSAGRIVD…EYYKKSDVGR (253 aa)). 2 positions are modified to phosphoserine: Ser-787 and Ser-792. Thr-794 is modified (phosphothreonine). Ser-802 is modified (phosphoserine). Thr-804 is subject to Phosphothreonine. Phosphoserine occurs at positions 831, 842, 864, 948, and 969.

This sequence belongs to the ATG9 family. In terms of assembly, homotrimer; forms a homotrimer with a central pore that forms a path between the two membrane leaflets. Interacts with ATG23 and ATG27 to form a cycling complex for trafficking to the PAS. Interacts (via N-terminus) with ATG11, required for recruitment of ATG9 to the PAS for the Cvt pathway during nutrient-rich conditions. Interacts (via N-terminus) with ATG17; required for recruitment to the PAS during autophagy and starved conditions. Interacts with ATG2 and ATG18; required for the retrieval of ATG9 from the PAS to the cytoplasmic pool. Interacts with ATG41. Interacts with the conserved oligomeric Golgi (COG) complex subunits COG3 and COG4. Interacts with TRS85. Post-translationally, phosphorylated by ATG1; phosphorylation is required for autophagy and cytoplasm to vacuole transport (Cvt) vesicle formation. Phosphorylation by ATG1 regulates ATG18 interaction and preautophagosome elongation. Phosphorylation at Ser-122 is required for selective autophagy by regulating anterograde trafficking and interaction with ATG23 and ATG27. Phosphorylation at Ser-122 prevents ubiquitination by the SCF(MET30) complex. Ubiquitinated by the SCF(MET30) complex in normal conditions, leading to its degradation by the proteasome, thereby preventing inappropriate induction of autophagy. Ubiquitination by the SCF(MET30) complex is prevented by phosphorylation at Ser-122.

The protein resides in the preautophagosomal structure membrane. The protein localises to the cytoplasmic vesicle membrane. It is found in the golgi apparatus membrane. It localises to the endoplasmic reticulum membrane. Its subcellular location is the mitochondrion membrane. The catalysed reaction is a 1,2-diacyl-sn-glycero-3-phosphocholine(in) = a 1,2-diacyl-sn-glycero-3-phosphocholine(out). It catalyses the reaction a 1,2-diacyl-sn-glycero-3-phospho-L-serine(in) = a 1,2-diacyl-sn-glycero-3-phospho-L-serine(out). The enzyme catalyses a 1,2-diacyl-sn-glycero-3-phosphoethanolamine(in) = a 1,2-diacyl-sn-glycero-3-phosphoethanolamine(out). It carries out the reaction a 1,2-diacyl-sn-glycero-3-phospho-(1D-myo-inositol-3-phosphate)(in) = a 1,2-diacyl-sn-glycero-3-phospho-(1D-myo-inositol-3-phosphate)(out). In terms of biological role, phospholipid scramblase involved in autophagy and cytoplasm to vacuole transport (Cvt) vesicle formation. Cycles between the preautophagosomal structure/phagophore assembly site (PAS) and the cytoplasmic vesicle pool and supplies membrane for the growing autophagosome. Lipid scramblase activity plays a key role in preautophagosomal structure/phagophore assembly by distributing the phospholipids that arrive through ATG2 from the cytoplasmic to the luminal leaflet of the bilayer, thereby driving autophagosomal membrane expansion. Required for mitophagy. Also involved in endoplasmic reticulum-specific autophagic process and is essential for the survival of cells subjected to severe ER stress. Different machineries are required for anterograde trafficking to the PAS during either the Cvt pathway or bulk autophagy and for retrograde trafficking. Recruits vesicle-tethering proteins TRS85 and YPT1 to the autophagosome formation site. Also recruits ATG23 and ATG8 to the PAS. The protein is Autophagy-related protein 9 of Saccharomyces cerevisiae (strain YJM789) (Baker's yeast).